We begin with the raw amino-acid sequence, 249 residues long: Small ribosomal subunit protein uS5 (249 aa).

Basic and acidic residues predominate over residues 1–14 (MSAEAPKRQFGDRR). Positions 1–29 (MSAEAPKRQFGDRRRGGRRGGRRDGEEKG) are disordered. The 64-residue stretch at 71–134 (LKDDVMKIRS…VIAKLSIIPI (64 aa)) folds into the S5 DRBM domain.

This sequence belongs to the universal ribosomal protein uS5 family. Component of the small ribosomal subunit. Mature ribosomes consist of a small (40S) and a large (60S) subunit. The 40S subunit contains about 32 different proteins and 1 molecule of RNA (18S). The 60S subunit contains 45 different proteins and 3 molecules of RNA (25S, 5.8S and 5S).

The protein resides in the cytoplasm. Component of the ribosome, a large ribonucleoprotein complex responsible for the synthesis of proteins in the cell. The small ribosomal subunit (SSU) binds messenger RNAs (mRNAs) and translates the encoded message by selecting cognate aminoacyl-transfer RNA (tRNA) molecules. The large subunit (LSU) contains the ribosomal catalytic site termed the peptidyl transferase center (PTC), which catalyzes the formation of peptide bonds, thereby polymerizing the amino acids delivered by tRNAs into a polypeptide chain. The nascent polypeptides leave the ribosome through a tunnel in the LSU and interact with protein factors that function in enzymatic processing, targeting, and the membrane insertion of nascent chains at the exit of the ribosomal tunnel. RPS2 is important for the assembly and function of the 40S ribosomal subunitand is nvolved in nucleolar processing of pre-18S ribosomal RNA and ribosome assembly. The polypeptide is Small ribosomal subunit protein uS5 (RPS21) (Candida albicans (strain SC5314 / ATCC MYA-2876) (Yeast)).